The primary structure comprises 364 residues: Ribosomal RNA large subunit methyltransferase F (364 aa).

A disordered region spans residues 1-28 (MTNKRKSAKPLEPAKRTPKLRTKKSRDL).

Belongs to the methyltransferase superfamily. METTL16/RlmF family.

The protein localises to the cytoplasm. It catalyses the reaction adenosine(1618) in 23S rRNA + S-adenosyl-L-methionine = N(6)-methyladenosine(1618) in 23S rRNA + S-adenosyl-L-homocysteine + H(+). Specifically methylates the adenine in position 1618 of 23S rRNA. The polypeptide is Ribosomal RNA large subunit methyltransferase F (Vibrio vulnificus (strain YJ016)).